A 744-amino-acid polypeptide reads, in one-letter code: Prestin (744 aa).

The Cytoplasmic segment spans residues 1–79 (MDHAEENEIP…WLPAYKFKEY (79 aa)). The chain crosses the membrane as a helical span at residues 80-105 (VLGDLVSGISTGVLQLPQGLAFAMLA). Residues 106–109 (AVPP) are Extracellular-facing. A helical membrane pass occupies residues 110-125 (VFGLYSSFYPVIMYCF). The Cytoplasmic portion of the chain corresponds to 126–137 (FGTSRHISIGPF). Residues 138 to 147 (AVISLMIGGV) form a helical membrane-spanning segment. Residues 148–178 (AVRLVPDDIVIPGGVNATNGTEARDALRVKV) lie on the Extracellular side of the membrane. Residues 158–168 (IPGGVNATNGT) carry the Involved in motor function motif. 2 N-linked (GlcNAc...) asparagine glycosylation sites follow: asparagine 163 and asparagine 166. Residues 179 to 196 (AMSVTLLSGIIQFCLGVC) traverse the membrane as a helical segment. Topologically, residues 197-208 (RFGFVAIYLTEP) are cytoplasmic. Residues 209–230 (LVRGFTTAAAVHVFTSMLKYLF) traverse the membrane as a helical segment. The Extracellular segment spans residues 231-243 (GVKTKRYSGIFSV). Residues 244–252 (VYSTVAVLQ) constitute an intramembrane region (helical). Residues 253 to 258 (NVKNLN) are Extracellular-facing. The chain crosses the membrane as a helical span at residues 259–282 (VCSLGVGLMVFGLLLGGKEFNERF). The Cytoplasmic portion of the chain corresponds to 283 to 291 (KEKLPAPIP). A helical membrane pass occupies residues 292–304 (LEFFAVVMGTGIS). Residues 305–337 (AGFNLHESYSVDVVGTLPLGLLPPANPDTSLFH) lie on the Extracellular side of the membrane. Residues 338–361 (LVYVDAIAIAIVGFSVTISMAKTL) form a helical membrane-spanning segment. At 362–370 (ANKHGYQVD) the chain is on the cytoplasmic side. A helical transmembrane segment spans residues 371 to 388 (GNQELIALGICNSIGSLF). Residues 389–396 (QTFSISCS) lie on the Extracellular side of the membrane. The helical transmembrane segment at 397–406 (LSRSLVQEGT) threads the bilayer. Serine 398 provides a ligand contact to salicylate. At 407-410 (GGKT) the chain is on the cytoplasmic side. A helical transmembrane segment spans residues 411 to 429 (QLAGCLASLMILLVILATG). The Extracellular portion of the chain corresponds to 430–436 (FLFESLP). A helical membrane pass occupies residues 437 to 455 (QAVLSAIVIVNLKGMFMQF). Over 456-469 (SDLPFFWRTSKIEL) the chain is Cytoplasmic. A helical transmembrane segment spans residues 470 to 484 (TIWLTTFVSSLFLGL). Aspartate 485 is a topological domain (extracellular). A helical membrane pass occupies residues 486-497 (YGLITAVIIALL). At 498–744 (TVIYRTQSPS…PNATPTTPEA (247 aa)) the chain is on the cytoplasmic side. The extended region for STAS domain stretch occupies residues 505 to 718 (SPSYKVLGQL…AVLGSHVREA (214 aa)). The STAS domain occupies 525-713 (AYEEVKEIPG…HSIHDAVLGS (189 aa)). Positions 717-744 (EAMAEQEASAPPPQDDMEPNATPTTPEA) are disordered.

It belongs to the SLC26A/SulP transporter (TC 2.A.53) family. As to quaternary structure, homodimer. Interacts (via STAS domain) with CALM; this interaction is calcium-dependent and the STAS domain interacts with only one lobe of CALM which is an elongated conformation. Interacts with MYH1. As to expression, highly expressed in mature outer hair cells, but not in inner hair cells or other cells of the basilar membrane and the organ of Corti.

The protein resides in the lateral cell membrane. The catalysed reaction is 2 hydrogencarbonate(in) + chloride(out) = 2 hydrogencarbonate(out) + chloride(in). In terms of biological role, voltage-sensitive motor protein that drives outer hair cell (OHC) electromotility (eM) and participates in sound amplification in the hearing organ. Converts changes in the transmembrane electric potential into mechanical displacements resulting in the coupling of its expansion to movement of a charged voltage sensor across the lipid membrane. The nature of the voltage sensor is not completely clear, and two models compete. In the first model, acts as an incomplete transporter where intracellular chloride anion acts as extrinsic voltage sensor that drives conformational change in the protein which is sufficient to produce a length change in the plane of the membrane and hence in the length of the OHC. The second model in which multiple charged amino acid residues are distributed at the intracellular and extracellular membrane interfaces that form an intrinsic voltage sensor, whose movement produces the non-linear capacitance (NLC). However, the effective voltage sensor may be the result of a hybrid voltage sensor assembled from intrinsic charge (charged residues) and extrinsic charge (bound anion). Notably, binding of anions to the anion-binding pocket partially neutralizes the intrinsic positive charge rather than to form an electrically negative sensor, therefore remaining charge may serve as voltage sensor that, after depolarization, moves from down (expanded state) to up (contracted) conformation, which is accompanied by an eccentric contraction of the intermembrane cross-sectional area of the protein as well as a major increase in the hydrophobic thickness of the protein having as consequences the plasma membrane thickening and the cell contraction after membrane depolarization. The anion-binding pocket transits from the inward-open (Down) state, where it is exposed toward the intracellular solvent in the absence of anion, to the occluded (Up) state upon anion binding. Salicylate competes for the anion-binding site and inhibits the voltage-sensor movement, and therefore inhibits the charge transfer and electromotility by displacing Cl(-) from the anion-binding site and by preventing the structural transitions to the contracted state. In addition, can act as a weak Cl(-)/HCO3 (-) antiporter across the cell membrane and so regulate the intracellular pH of the outer hair cells (OHCs), while firstly found as being unable to mediate electrogenic anion transport. Moreover, supports a role in cardiac mechanical amplification serving as an elastic element to enhance the actomyosin- based sarcomere contraction system. This is Prestin from Meriones unguiculatus (Mongolian jird).